The primary structure comprises 900 residues: Translation initiation factor IF-2 (900 aa).

The tract at residues 48-310 (HLNRDRGNAP…KPSSLQQSFN (263 aa)) is disordered. Over residues 68–82 (STLNVPSTGGKSKSV) the composition is skewed to polar residues. 2 stretches are compositionally biased toward basic and acidic residues: residues 85-98 (EVRKTRTYVKRDPI) and 108-164 (QARR…KEKV). Residues 165–176 (TNQQNENMTKPA) show a composition bias toward polar residues. A compositionally biased stretch (basic and acidic residues) spans 177 to 237 (QSEKAKREAE…SATKPEESAD (61 aa)). Residues 263 to 277 (TRTRAAKVTKQKKGN) show a composition bias toward basic residues. Basic and acidic residues predominate over residues 278–291 (RQSESKADREEARA). The region spanning 399–568 (FRAPVVTIMG…LLQAEVLELK (170 aa)) is the tr-type G domain. The segment at 408-415 (GHVDHGKT) is G1. 408–415 (GHVDHGKT) provides a ligand contact to GTP. A G2 region spans residues 433 to 437 (GITQH). Positions 454–457 (DTPG) are G3. Residues 454 to 458 (DTPGH) and 508 to 511 (NKID) contribute to the GTP site. The G4 stretch occupies residues 508 to 511 (NKID). Residues 544–546 (SAK) form a G5 region.

The protein belongs to the TRAFAC class translation factor GTPase superfamily. Classic translation factor GTPase family. IF-2 subfamily.

Its subcellular location is the cytoplasm. Functionally, one of the essential components for the initiation of protein synthesis. Protects formylmethionyl-tRNA from spontaneous hydrolysis and promotes its binding to the 30S ribosomal subunits. Also involved in the hydrolysis of GTP during the formation of the 70S ribosomal complex. This is Translation initiation factor IF-2 from Pectobacterium atrosepticum (strain SCRI 1043 / ATCC BAA-672) (Erwinia carotovora subsp. atroseptica).